Consider the following 540-residue polypeptide: Arylsulfatase K (540 aa).

Positions 1 to 22 are cleaved as a signal peptide; sequence MLLLWVSVVAASALAAPAPGAD. Residues Asp-44 and Cys-84 each contribute to the Ca(2+) site. Cys-84 (nucleophile) is an active-site residue. Cys-84 is modified (3-oxoalanine (Cys)). Asn-112 carries N-linked (GlcNAc...) asparagine glycosylation. Lys-132 serves as a coordination point for substrate. Asn-197 is a glycosylation site (N-linked (GlcNAc...) asparagine). His-255 provides a ligand contact to substrate. Residue Asn-266 is glycosylated (N-linked (GlcNAc...) asparagine). Residues Asp-317 and His-318 each contribute to the Ca(2+) site. N-linked (GlcNAc...) asparagine glycans are attached at residues Asn-379, Asn-417, and Asn-502.

It belongs to the sulfatase family. It depends on Ca(2+) as a cofactor. The conversion to 3-oxoalanine (also known as C-formylglycine, FGly), of a serine or cysteine residue in prokaryotes and of a cysteine residue in eukaryotes, is critical for catalytic activity. In terms of processing, the 75-kDa precursor undergoes proteolytic processing to yield a 23 kDa form. Post-translationally, N-glycosylated with both high mannose and complex type sugars.

Its subcellular location is the secreted. The protein resides in the lysosome. The enzyme catalyses an aryl sulfate + H2O = a phenol + sulfate + H(+). It catalyses the reaction Hydrolysis of the 2-sulfate groups of the 2-O-sulfo-D-glucuronate residues of chondroitin sulfate, heparin and heparitin sulfate.. In terms of biological role, catalyzes the hydrolysis of pseudosubstrates such as p-nitrocatechol sulfate and p-nitrophenyl sulfate. Catalyzes the hydrolysis of the 2-sulfate groups of the 2-O-sulfo-D-glucuronate residues of chondroitin sulfate, heparin and heparitin sulfate. Acts selectively on 2-sulfoglucuronate and lacks activity against 2-sulfoiduronate. The sequence is that of Arylsulfatase K (ARSK) from Bos taurus (Bovine).